The chain runs to 154 residues: Aspartate carbamoyltransferase regulatory chain (154 aa).

Zn(2+) is bound by residues cysteine 109, cysteine 114, cysteine 138, and cysteine 141.

This sequence belongs to the PyrI family. As to quaternary structure, contains catalytic and regulatory chains. The cofactor is Zn(2+).

Functionally, involved in allosteric regulation of aspartate carbamoyltransferase. In Tolumonas auensis (strain DSM 9187 / NBRC 110442 / TA 4), this protein is Aspartate carbamoyltransferase regulatory chain.